We begin with the raw amino-acid sequence, 162 residues long: Phosphopantetheine adenylyltransferase (162 aa).

Residue Ser-11 coordinates substrate. Residues 11–12 and His-19 each bind ATP; that span reads SF. Substrate-binding residues include Lys-43, Val-76, and Arg-90. ATP-binding positions include 91–93, Glu-101, and 126–132; these read GLR and LKFVSSS.

It belongs to the bacterial CoaD family. As to quaternary structure, homohexamer. Mg(2+) serves as cofactor.

The protein resides in the cytoplasm. It carries out the reaction (R)-4'-phosphopantetheine + ATP + H(+) = 3'-dephospho-CoA + diphosphate. Its pathway is cofactor biosynthesis; coenzyme A biosynthesis; CoA from (R)-pantothenate: step 4/5. In terms of biological role, reversibly transfers an adenylyl group from ATP to 4'-phosphopantetheine, yielding dephospho-CoA (dPCoA) and pyrophosphate. The polypeptide is Phosphopantetheine adenylyltransferase (Streptococcus suis (strain 05ZYH33)).